Reading from the N-terminus, the 72-residue chain is Translation initiation factor IF-1 (72 aa).

The region spanning 1–72 (MAKEDTLEFP…TKGRINYRFK (72 aa)) is the S1-like domain.

This sequence belongs to the IF-1 family. Component of the 30S ribosomal translation pre-initiation complex which assembles on the 30S ribosome in the order IF-2 and IF-3, IF-1 and N-formylmethionyl-tRNA(fMet); mRNA recruitment can occur at any time during PIC assembly.

The protein resides in the cytoplasm. In terms of biological role, one of the essential components for the initiation of protein synthesis. Stabilizes the binding of IF-2 and IF-3 on the 30S subunit to which N-formylmethionyl-tRNA(fMet) subsequently binds. Helps modulate mRNA selection, yielding the 30S pre-initiation complex (PIC). Upon addition of the 50S ribosomal subunit IF-1, IF-2 and IF-3 are released leaving the mature 70S translation initiation complex. The protein is Translation initiation factor IF-1 of Roseobacter denitrificans (strain ATCC 33942 / OCh 114) (Erythrobacter sp. (strain OCh 114)).